Here is a 460-residue protein sequence, read N- to C-terminus: Cyclin-T1-2 (460 aa).

Disordered regions lie at residues 1–20 (MDEA…SSVA) and 285–345 (QPIS…QDHS). Residues 314-324 (SDDHSVHDGSR) show a composition bias toward basic and acidic residues. A compositionally biased stretch (polar residues) spans 332–345 (NSESEAQKNLQDHS).

It belongs to the cyclin family. Cyclin T subfamily.

The sequence is that of Cyclin-T1-2 (CYCT1-2) from Arabidopsis thaliana (Mouse-ear cress).